The primary structure comprises 362 residues: Oxygen-dependent coproporphyrinogen-III oxidase (362 aa).

Positions 12–31 (RQENDQSTPQLELPPTDSRD) are disordered. A substrate-binding site is contributed by Ser118. Residues His122 and His132 each contribute to the a divalent metal cation site. His132 acts as the Proton donor in catalysis. 134 to 136 (NYR) contacts substrate. Positions 166 and 196 each coordinate a divalent metal cation. Residues 286–321 (YVEFNLVWDRGTIFGLQTNGRTESILMSLPPLVRWE) are important for dimerization.

The protein belongs to the aerobic coproporphyrinogen-III oxidase family. In terms of assembly, homodimer. A divalent metal cation is required as a cofactor.

Its subcellular location is the cytoplasm. It carries out the reaction coproporphyrinogen III + O2 + 2 H(+) = protoporphyrinogen IX + 2 CO2 + 2 H2O. It functions in the pathway porphyrin-containing compound metabolism; protoporphyrin-IX biosynthesis; protoporphyrinogen-IX from coproporphyrinogen-III (O2 route): step 1/1. In terms of biological role, involved in the heme and chlorophyll biosynthesis. Catalyzes the aerobic oxidative decarboxylation of propionate groups of rings A and B of coproporphyrinogen-III to yield the vinyl groups in protoporphyrinogen-IX. The chain is Oxygen-dependent coproporphyrinogen-III oxidase from Synechococcus sp. (strain CC9902).